The sequence spans 84 residues: Small ribosomal subunit protein bS16 (84 aa).

This sequence belongs to the bacterial ribosomal protein bS16 family.

This chain is Small ribosomal subunit protein bS16, found in Burkholderia ambifaria (strain MC40-6).